A 210-amino-acid chain; its full sequence is ATP phosphoribosyltransferase (210 aa).

This sequence belongs to the ATP phosphoribosyltransferase family. Short subfamily. Heteromultimer composed of HisG and HisZ subunits.

It is found in the cytoplasm. It catalyses the reaction 1-(5-phospho-beta-D-ribosyl)-ATP + diphosphate = 5-phospho-alpha-D-ribose 1-diphosphate + ATP. Its pathway is amino-acid biosynthesis; L-histidine biosynthesis; L-histidine from 5-phospho-alpha-D-ribose 1-diphosphate: step 1/9. Catalyzes the condensation of ATP and 5-phosphoribose 1-diphosphate to form N'-(5'-phosphoribosyl)-ATP (PR-ATP). Has a crucial role in the pathway because the rate of histidine biosynthesis seems to be controlled primarily by regulation of HisG enzymatic activity. The polypeptide is ATP phosphoribosyltransferase (Bacillus cytotoxicus (strain DSM 22905 / CIP 110041 / 391-98 / NVH 391-98)).